Reading from the N-terminus, the 328-residue chain is Malate dehydrogenase (328 aa).

11-17 (GAAGQIG) lines the NAD(+) pocket. Arg-94 and Arg-100 together coordinate substrate. NAD(+)-binding positions include Asn-107, Gln-114, and 131 to 133 (VGN). Residues Asn-133 and Arg-164 each contribute to the substrate site. The Proton acceptor role is filled by His-189.

This sequence belongs to the LDH/MDH superfamily. MDH type 2 family.

It catalyses the reaction (S)-malate + NAD(+) = oxaloacetate + NADH + H(+). In terms of biological role, catalyzes the reversible oxidation of malate to oxaloacetate. This is Malate dehydrogenase from Xylella fastidiosa (strain 9a5c).